Reading from the N-terminus, the 339-residue chain is Dihydroorotate dehydrogenase (quinone) (339 aa).

FMN contacts are provided by residues 62 to 66 and threonine 86; that span reads AGMDK. Residue lysine 66 participates in substrate binding. A substrate-binding site is contributed by 111-115; it reads NRMGF. Residues asparagine 139 and asparagine 172 each coordinate FMN. Residue asparagine 172 coordinates substrate. Residue serine 175 is the Nucleophile of the active site. A substrate-binding site is contributed by asparagine 177. 2 residues coordinate FMN: lysine 217 and threonine 245. 246–247 serves as a coordination point for substrate; it reads NT. FMN-binding positions include glycine 268, glycine 297, and 318-319; that span reads YS.

The protein belongs to the dihydroorotate dehydrogenase family. Type 2 subfamily. In terms of assembly, monomer. Requires FMN as cofactor.

It is found in the cell membrane. It carries out the reaction (S)-dihydroorotate + a quinone = orotate + a quinol. It participates in pyrimidine metabolism; UMP biosynthesis via de novo pathway; orotate from (S)-dihydroorotate (quinone route): step 1/1. Functionally, catalyzes the conversion of dihydroorotate to orotate with quinone as electron acceptor. This is Dihydroorotate dehydrogenase (quinone) from Shewanella putrefaciens (strain CN-32 / ATCC BAA-453).